A 252-amino-acid chain; its full sequence is Streptothricin hydrolase (252 aa).

Residue C158 is the Nucleophile of the active site. Residues 230 to 242 (AVGPAAAPGLPVS) show a composition bias toward low complexity. The segment at 230 to 252 (AVGPAAAPGLPVSPAAPPPSPVR) is disordered. The span at 243 to 252 (PAAPPPSPVR) shows a compositional bias: pro residues.

The protein belongs to the isochorismatase family.

It catalyses the reaction streptothricin F + H2O = streptothricin F acid. Functionally, catalyzes the hydrolysis of the amide bond of streptolidine lactam, thereby conferring streptothricin (ST) resistance. Can hydrolyze streptothricin-F and streptothricin-D. However, this strain is believed to be a ST nonproducer, which raises the possibility that its true role may not be its involvement in self-resistance to STs. May catalyze the hydrolysis of naturally occurring cyclic amide compounds that are structurally related to STs. This chain is Streptothricin hydrolase (sttH), found in Streptomyces noursei (Streptomyces albulus).